Reading from the N-terminus, the 124-residue chain is Tax1-binding protein 3 (124 aa).

N-acetylserine is present on Ser2. The PDZ domain maps to 15-112 (RVEIHKLRQG…EVVRLLVTRQ (98 aa)). Ser61 is subject to Phosphoserine.

Interacts (via its PDZ domain) with GLS2. Interacts (via its PDZ domain) with RTKN (via the C-terminal region); this interaction facilitates Rho-mediated activation of the FOS serum response element (SRE). Interacts (via PDZ domain) with ARHGEF16. Interacts (via PDZ domain) with KCNJ4 (via C-terminus). Competes with LIN7A for KCNJ4 binding. Interacts (via its PDZ domain) with CTNNB1; this interaction inhibits the transcriptional activity of CTNNB1. Interacts with ADGRB2.

It localises to the cytoplasm. The protein localises to the nucleus. The protein resides in the cell membrane. In terms of biological role, may regulate a number of protein-protein interactions by competing for PDZ domain binding sites. Binds CTNNB1 and may thereby act as an inhibitor of the Wnt signaling pathway. Competes with LIN7A for KCNJ4 binding, and thereby promotes KCNJ4 internalization. May play a role in the Rho signaling pathway. In Mus musculus (Mouse), this protein is Tax1-binding protein 3.